The primary structure comprises 311 residues: HPr kinase/phosphorylase (311 aa).

Residues His-138 and Lys-159 contribute to the active site. ATP is bound at residue 153–160 (GKSGVGKS). Ser-160 provides a ligand contact to Mg(2+). The Proton acceptor; for phosphorylation activity. Proton donor; for dephosphorylation activity role is filled by Asp-177. The interval 201 to 210 (LEIRGLGIIN) is important for the catalytic mechanism of both phosphorylation and dephosphorylation. Glu-202 serves as a coordination point for Mg(2+). Arg-243 is an active-site residue. Residues 264 to 269 (PVRPGR) are important for the catalytic mechanism of dephosphorylation.

It belongs to the HPrK/P family. Homohexamer. The cofactor is Mg(2+).

The catalysed reaction is [HPr protein]-L-serine + ATP = [HPr protein]-O-phospho-L-serine + ADP + H(+). The enzyme catalyses [HPr protein]-O-phospho-L-serine + phosphate + H(+) = [HPr protein]-L-serine + diphosphate. In terms of biological role, catalyzes the ATP- as well as the pyrophosphate-dependent phosphorylation of a specific serine residue in HPr, a phosphocarrier protein of the phosphoenolpyruvate-dependent sugar phosphotransferase system (PTS). HprK/P also catalyzes the pyrophosphate-producing, inorganic phosphate-dependent dephosphorylation (phosphorolysis) of seryl-phosphorylated HPr (P-Ser-HPr). The two antagonistic activities of HprK/P are regulated by several intracellular metabolites, which change their concentration in response to the absence or presence of rapidly metabolisable carbon sources (glucose, fructose, etc.) in the growth medium. Also phosphorylates/dephosphorylates the HPr-like catabolite repression protein crh on a specific serine residue. Therefore, by controlling the phosphorylation state of HPr and crh, HPrK/P is a sensor enzyme that plays a major role in the regulation of carbon metabolism and sugar transport: it mediates carbon catabolite repression (CCR), and regulates PTS-catalyzed carbohydrate uptake and inducer exclusion. This chain is HPr kinase/phosphorylase, found in Geobacillus kaustophilus (strain HTA426).